Consider the following 468-residue polypeptide: Probable soluble pyridine nucleotide transhydrogenase (468 aa).

33 to 42 contributes to the FAD binding site; sequence ERGRMLGGVC.

This sequence belongs to the class-I pyridine nucleotide-disulfide oxidoreductase family. FAD serves as cofactor.

Its subcellular location is the cytoplasm. The enzyme catalyses NAD(+) + NADPH = NADH + NADP(+). In terms of biological role, conversion of NADPH, generated by peripheral catabolic pathways, to NADH, which can enter the respiratory chain for energy generation. This Mycobacterium bovis (strain ATCC BAA-935 / AF2122/97) protein is Probable soluble pyridine nucleotide transhydrogenase (sthA).